The primary structure comprises 316 residues: Nucleoside diphosphate-linked moiety X motif 6 (316 aa).

In terms of domain architecture, Nudix hydrolase spans 141-273 (SHQVGVAGAV…TSRVARLLLY (133 aa)). A Nudix box motif is present at residues 176–197 (GLSEPEEDIGDTAVREVFEETG).

This sequence belongs to the Nudix hydrolase family. As to quaternary structure, monomer and homodimer. As to expression, detected in liver, kidney and esophagus (at protein level). Ubiquitous.

The protein resides in the cytoplasm. It localises to the nucleus. Its subcellular location is the mitochondrion. Its function is as follows. May contribute to the regulation of cell proliferation. The protein is Nucleoside diphosphate-linked moiety X motif 6 (NUDT6) of Homo sapiens (Human).